The sequence spans 1043 residues: RNA-directed RNA polymerase (1043 aa).

The chain crosses the membrane as a helical span at residues 26-42 (VPLAKSLALVAGSCVVY). The tract at residues 43 to 1043 (KIIVHRRTLV…GPAGSRGRGK (1001 aa)) is cytoplasmic. The capping stretch occupies residues 105-291 (NGHPISGGTR…LVWCLPVASY (187 aa)). The RdRp catalytic domain occupies 588–713 (EEPSEGDFSN…ERRFAKNYAK (126 aa)). Asp699 serves as the catalytic For RdRp/TNTase activity. Disordered regions lie at residues 879-902 (NRDNEPNPYKDTLDLEGPADGRVD) and 918-1043 (NQVT…GRGK). 2 stretches are compositionally biased toward low complexity: residues 922–934 (SSQAGAAGSGDAS) and 1032–1043 (SRGPAGSRGRGK).

This sequence belongs to the nodaviridae RNA polymerase family. In terms of assembly, homododecamer. Forms 2 stacked rings of 35-nm in diameter, arranged in a crown-like structure at the opening of virus-induced replication vesicles. Interacts with protein B2. Requires Mn(2+) as cofactor.

The protein resides in the host mitochondrion outer membrane. It carries out the reaction RNA(n) + a ribonucleoside 5'-triphosphate = RNA(n+1) + diphosphate. RNA-dependent RNA polymerase, which replicates the viral genome composed of 2 RNA segments, RNA1 and RNA2. Does not need an exogenous primer. Also possesses a terminal nucleotidyl transferase (TNTase) activity. The TNTase catalyzes the addition of nucleotide to the 3'-end of plus- and minus-stranded RNAs, probably to repair the 3'-end nucleotide loss. Forms the open necked connection to the cytosol of the virus-induced replication vesicles. Mediates viral RNA1 recruitment. In Nodamura virus (strain Mag115) (NoV), this protein is RNA-directed RNA polymerase.